The following is a 326-amino-acid chain: tRNA-modifying protein YgfZ (326 aa).

Folate-binding residues include Trp27 and Trp189.

The protein belongs to the tRNA-modifying YgfZ family.

It localises to the cytoplasm. Its function is as follows. Folate-binding protein involved in regulating the level of ATP-DnaA and in the modification of some tRNAs. It is probably a key factor in regulatory networks that act via tRNA modification, such as initiation of chromosomal replication. The polypeptide is tRNA-modifying protein YgfZ (Escherichia coli O7:K1 (strain IAI39 / ExPEC)).